The following is a 168-amino-acid chain: Auxin-responsive protein IAA1 (168 aa).

Residues 1-74 form a disordered region; sequence MEVTNGLNLK…NRKNNNNKNV (74 aa). An EAR-like (transcriptional repression) motif is present at residues 14-18; that stretch reads LRLGL. A compositionally biased stretch (polar residues) spans 23 to 34; the sequence is EEQQLELSCVRS. A PB1 domain is found at 74–161; that stretch reads VSYVKVSMDG…SCQKLRIMKG (88 aa).

It belongs to the Aux/IAA family. As to quaternary structure, homodimers and heterodimers. Interacts with the auxin-responsive protein IAA2. Interacts with TPL. Phosphorylated by phytochrome A in vitro. Preferentially expressed in stems, leaves and flowers.

The protein resides in the nucleus. In terms of biological role, aux/IAA proteins are short-lived transcriptional factors that function as repressors of early auxin response genes at low auxin concentrations. Repression is thought to result from the interaction with auxin response factors (ARFs), proteins that bind to the auxin-responsive promoter element (AuxRE). Formation of heterodimers with ARF proteins may alter their ability to modulate early auxin response genes expression. The protein is Auxin-responsive protein IAA1 (IAA1) of Arabidopsis thaliana (Mouse-ear cress).